The chain runs to 156 residues: CD-NTase/cGAS isopeptidase (156 aa).

Residues 9–147 (IDDFDNHVVI…WIGKKIKNDI (139 aa)) form the MPN domain. Glu-38 acts as the Proton donor/acceptor in catalysis. Zn(2+)-binding residues include His-100, His-102, and Asp-113. Positions 100-113 (HTHPEDFPHPSFID) match the JAMM motif motif.

The protein belongs to the peptidase M67B family. Cap3 isopeptidase subfamily.

In terms of biological role, metalloprotease priming reversal component of a CBASS antivirus system. CBASS (cyclic oligonucleotide-based antiphage signaling system) provides immunity against bacteriophages. The CD-NTase protein (DncV) synthesizes cyclic nucleotides in response to infection; these serve as specific second messenger signals. The signals activate a diverse range of effectors, leading to bacterial cell death and thus abortive phage infection. A type II-A(GA) CBASS system. Functionally, reverses the primed state of DncV, the CD-NTase, cleaving it from cellular proteins. Cleaves a Sumo-DncV-DncV fusion protein precisely between the 2 DncV moieties. Protects E.coli against phage infection. When capV and dncV are introduced in E.coli MG1655 there is 1000-fold protection against phage P1; protection against other phage (T4, T5 and T6) requires the 2 subsequent genes. In another paper the capV-dncV-cap2-cap3 operon gives 10(4)-10(5)-fold protection against phages lambda, T2, T4 and T6, about 1000-fold protection against P1 and 10-fold protection against T5. This chain is CD-NTase/cGAS isopeptidase, found in Escherichia coli (strain TW11681).